The sequence spans 454 residues: Tol-Pal system protein TolB (454 aa).

The signal sequence occupies residues 1–21; the sequence is MSLRPISLMLALLLTSAPALA.

It belongs to the TolB family. The Tol-Pal system is composed of five core proteins: the inner membrane proteins TolA, TolQ and TolR, the periplasmic protein TolB and the outer membrane protein Pal. They form a network linking the inner and outer membranes and the peptidoglycan layer.

It localises to the periplasm. In terms of biological role, part of the Tol-Pal system, which plays a role in outer membrane invagination during cell division and is important for maintaining outer membrane integrity. The protein is Tol-Pal system protein TolB of Sphingopyxis alaskensis (strain DSM 13593 / LMG 18877 / RB2256) (Sphingomonas alaskensis).